A 305-amino-acid chain; its full sequence is uncharacterized protein (305 aa).

A run of 3 helical transmembrane segments spans residues 52 to 72 (TINL…SKII), 89 to 109 (IAGF…FIAA), and 120 to 140 (VIAI…GSLS).

This sequence belongs to the MscS (TC 1.A.23) family.

The protein resides in the cell membrane. This is an uncharacterized protein from Buchnera aphidicola subsp. Acyrthosiphon pisum (strain APS) (Acyrthosiphon pisum symbiotic bacterium).